The following is a 320-amino-acid chain: Probable arabinan endo-1,5-alpha-L-arabinosidase C (320 aa).

Residues 1-16 (MYRSTLLFLFIALVNA) form the signal peptide. The active-site Proton acceptor is Asp-31. N-linked (GlcNAc...) asparagine glycosylation is found at Asn-73, Asn-137, and Asn-191. Glu-199 (proton donor) is an active-site residue.

This sequence belongs to the glycosyl hydrolase 43 family.

Its subcellular location is the secreted. The enzyme catalyses Endohydrolysis of (1-&gt;5)-alpha-arabinofuranosidic linkages in (1-&gt;5)-arabinans.. The protein operates within glycan metabolism; L-arabinan degradation. In terms of biological role, endo-1,5-alpha-L-arabinanase involved in degradation of pectin. Its preferred substrate is linear 1,5-alpha-L-arabinan. The sequence is that of Probable arabinan endo-1,5-alpha-L-arabinosidase C (abnC) from Aspergillus terreus (strain NIH 2624 / FGSC A1156).